The chain runs to 393 residues: MQTSHYAAEKDMQDAVPRLTFTLRDEERLMMKIGVFVPIGNNGWLISTHAPQYMPTFELNKAIVQKAEHYHFDFALSMIKLRGFGGKTEFWDHNLESFTLMAGLAAVTSRIQIYATAATLTLPPAIVARMAATIDSISGGRFGVNLVTGWQKPEYEQMGIWPGDDYFSRRYDYLTEYVQVLRDLWGSGKSDFKGDFFTMNDCRVSPQPSVPMKVICAGQSDAGMAFSAQYADFNFCFGKGVNTPTAFAPTAARMKQAAEQTGRDVGSYVLFMVIADETDDAARAKWEHYKAGADEEALSWLTEQSQKDTRSGTDTNVRQMADPTSAVNINMGTLVGSYASVARMLDEVASVPGAEGVLLTFDDFLSGIETFGERIQPLMQCRAHLPALTQEVA.

FMN is bound by residues 79-80, asparagine 145, glutamate 154, 170-171, and serine 220; these read IK and RY.

This sequence belongs to the NtaA/SnaA/DszA monooxygenase family. RutA subfamily.

It catalyses the reaction uracil + FMNH2 + NADH + O2 = (Z)-3-ureidoacrylate + FMN + NAD(+) + H2O + H(+). The catalysed reaction is thymine + FMNH2 + NADH + O2 = (Z)-2-methylureidoacrylate + FMN + NAD(+) + H2O + H(+). Functionally, catalyzes the pyrimidine ring opening between N-3 and C-4 by an unusual flavin hydroperoxide-catalyzed mechanism, adding oxygen atoms in the process to yield ureidoacrylate peracid, that immediately reacts with FMN forming ureidoacrylate and FMN-N(5)-oxide. The FMN-N(5)-oxide reacts spontaneously with NADH to produce FMN. Requires the flavin reductase RutF to regenerate FMN in vivo. The polypeptide is Pyrimidine monooxygenase RutA (Escherichia coli O139:H28 (strain E24377A / ETEC)).